The primary structure comprises 69 residues: MSSNCGSCDCADKTQCVKKGTSYTFDIVETQESYKEAMIMDVGAEENNANCKCKCGSSCSCVNCTCCPN.

This sequence belongs to the metallothionein superfamily. Type 15 family. In terms of tissue distribution, expressed in leaf mesophyll cells, root tips, and at low levels in anthers.

Its function is as follows. Metallothioneins have a high content of cysteine residues that bind various heavy metals. Functions as a metal chelator of copper (Cu) and zinc (Zn). Plays a role in Cu homeostasis, specifically in the remobilization of Cu from senescing leaves. The mobilization of Cu from internal sources is important for seed development. The sequence is that of Metallothionein-like protein 3 from Arabidopsis thaliana (Mouse-ear cress).